A 487-amino-acid chain; its full sequence is Probable peptidoglycan glycosyltransferase FtsW (487 aa).

9 helical membrane-spanning segments follow: residues 30–50 (VSLI…VTSA), 71–91 (IYIV…MQWW), 93–113 (TSNA…LLVG), 122–142 (WLAI…FFFC), 167–187 (VVFF…TVVV), 203–223 (LWQF…LIMF), 282–302 (FIMA…VLAL), 332–352 (IGIW…GILP), and 358–378 (FPLL…VGLL). Disordered regions lie at residues 398-419 (KAKA…SAGK) and 444-487 (IDSI…DGYV). Polar residues predominate over residues 401–416 (ASTSSSRKNKPKTASS). Over residues 444–453 (IDSIMDDFAQ) the composition is skewed to acidic residues.

Belongs to the SEDS family. FtsW subfamily.

It localises to the cell inner membrane. It catalyses the reaction [GlcNAc-(1-&gt;4)-Mur2Ac(oyl-L-Ala-gamma-D-Glu-L-Lys-D-Ala-D-Ala)](n)-di-trans,octa-cis-undecaprenyl diphosphate + beta-D-GlcNAc-(1-&gt;4)-Mur2Ac(oyl-L-Ala-gamma-D-Glu-L-Lys-D-Ala-D-Ala)-di-trans,octa-cis-undecaprenyl diphosphate = [GlcNAc-(1-&gt;4)-Mur2Ac(oyl-L-Ala-gamma-D-Glu-L-Lys-D-Ala-D-Ala)](n+1)-di-trans,octa-cis-undecaprenyl diphosphate + di-trans,octa-cis-undecaprenyl diphosphate + H(+). It participates in cell wall biogenesis; peptidoglycan biosynthesis. Functionally, peptidoglycan polymerase that is essential for cell division. In Pseudoalteromonas atlantica (strain T6c / ATCC BAA-1087), this protein is Probable peptidoglycan glycosyltransferase FtsW.